The chain runs to 185 residues: Ribosome-recycling factor (185 aa).

This sequence belongs to the RRF family.

The protein resides in the cytoplasm. Responsible for the release of ribosomes from messenger RNA at the termination of protein biosynthesis. May increase the efficiency of translation by recycling ribosomes from one round of translation to another. The sequence is that of Ribosome-recycling factor from Aeromonas salmonicida (strain A449).